Reading from the N-terminus, the 77-residue chain is Exodeoxyribonuclease 7 small subunit (77 aa).

It belongs to the XseB family. As to quaternary structure, heterooligomer composed of large and small subunits.

It is found in the cytoplasm. It catalyses the reaction Exonucleolytic cleavage in either 5'- to 3'- or 3'- to 5'-direction to yield nucleoside 5'-phosphates.. Functionally, bidirectionally degrades single-stranded DNA into large acid-insoluble oligonucleotides, which are then degraded further into small acid-soluble oligonucleotides. The polypeptide is Exodeoxyribonuclease 7 small subunit (Clostridium acetobutylicum (strain ATCC 824 / DSM 792 / JCM 1419 / IAM 19013 / LMG 5710 / NBRC 13948 / NRRL B-527 / VKM B-1787 / 2291 / W)).